The chain runs to 305 residues: Oxygen-dependent coproporphyrinogen-III oxidase (305 aa).

Serine 93 contacts substrate. Residues histidine 97 and histidine 107 each contribute to the a divalent metal cation site. The active-site Proton donor is the histidine 107. 109-111 (NVR) serves as a coordination point for substrate. Residues histidine 146 and histidine 176 each coordinate a divalent metal cation. Positions 241–276 (YVEFNLVFDRGTLFGLQSGGRTESILMSLPPQVRWG) are important for dimerization. 259–261 (GGR) provides a ligand contact to substrate.

This sequence belongs to the aerobic coproporphyrinogen-III oxidase family. In terms of assembly, homodimer. It depends on a divalent metal cation as a cofactor.

The protein resides in the cytoplasm. It catalyses the reaction coproporphyrinogen III + O2 + 2 H(+) = protoporphyrinogen IX + 2 CO2 + 2 H2O. The protein operates within porphyrin-containing compound metabolism; protoporphyrin-IX biosynthesis; protoporphyrinogen-IX from coproporphyrinogen-III (O2 route): step 1/1. In terms of biological role, involved in the heme biosynthesis. Catalyzes the aerobic oxidative decarboxylation of propionate groups of rings A and B of coproporphyrinogen-III to yield the vinyl groups in protoporphyrinogen-IX. This is Oxygen-dependent coproporphyrinogen-III oxidase from Pseudomonas paraeruginosa (strain DSM 24068 / PA7) (Pseudomonas aeruginosa (strain PA7)).